A 271-amino-acid chain; its full sequence is Probable CAAX prenyl protease 2 (271 aa).

Transmembrane regions (helical) follow at residues 3–23 (VYLI…TFPV) and 42–62 (CISV…IIGP). Residues Glu-126 and His-160 each act as proton donor/acceptor in the active site. The next 2 helical transmembrane spans lie at 174 to 194 (AYIA…VFGW) and 236 to 256 (IYYT…GITD).

This sequence belongs to the peptidase U48 family.

It is found in the endoplasmic reticulum membrane. The catalysed reaction is Hydrolyzes the peptide bond -P2-(S-farnesyl or geranylgeranyl)C-P1'-P2'-P3'-COOH where P1' and P2' are amino acids with aliphatic sidechains and P3' is any C-terminal residue.. In terms of biological role, protease involved in the processing of a variety of prenylated proteins containing the C-terminal CAAX motif, where C is a cysteine modified with an isoprenoid lipid, A is an aliphatic amino acid and X is any C-terminal amino acid. Proteolytically removes the C-terminal three residues of farnesylated proteins, leaving the prenylated cysteine as the new C-terminus. This chain is Probable CAAX prenyl protease 2, found in Schizosaccharomyces pombe (strain 972 / ATCC 24843) (Fission yeast).